Reading from the N-terminus, the 425-residue chain is Paired box pox-neuro protein (425 aa).

A DNA-binding region (paired) is located at residues 5–132 (GQAGVNQLGG…SSINRILRNS (128 aa)). The tract at residues 8-64 (GVNQLGGVFVNGRPLPDCVRRRIVDLALCGVRPCDISRQLLVSHGCVSKILTRFYET) is PAI subdomain. An RED subdomain region spans residues 84–132 (TVVKKIIRLKEENSGMFAWEIREQLQQQRVCDPSSVPSISSINRILRNS). Disordered regions lie at residues 159-188 (QAGS…AATP), 297-358 (TKSE…RKRN), and 383-425 (LESS…EVVN). The segment covering 172-185 (APPPPVTVAPPTPA) has biased composition (pro residues). 2 stretches are compositionally biased toward low complexity: residues 323–332 (SSPAALSLTA) and 340–349 (GSAPEASPGS). The span at 402–425 (TPEDEDPAEAEEEQEEEDSVEVVN) shows a compositional bias: acidic residues.

In terms of tissue distribution, central and peripheral nervous systems.

It localises to the nucleus. Transcriptional regulator that specifies poly-innervated organs (chemosensory bristle). Also controls the number of neurons. In Drosophila melanogaster (Fruit fly), this protein is Paired box pox-neuro protein (Poxn).